The following is a 601-amino-acid chain: Molybdenum cofactor synthesis protein cinnamon (601 aa).

Residues S3–V153 form an MPT adenylyltransferase region. The tract at residues S173–P195 is disordered. The segment at T184–F596 is MPT Mo-transferase. S376 carries the phosphoserine modification.

This sequence in the N-terminal section; belongs to the MoaB/Mog family. The protein in the C-terminal section; belongs to the MoeA family. Mg(2+) serves as cofactor.

It catalyses the reaction molybdopterin + ATP + H(+) = adenylyl-molybdopterin + diphosphate. It carries out the reaction adenylyl-molybdopterin + molybdate = Mo-molybdopterin + AMP + H(+). It participates in cofactor biosynthesis; molybdopterin biosynthesis. Catalyzes two steps in the biosynthesis of the molybdenum cofactor. In the first step, molybdopterin is adenylated. Subsequently, molybdate is inserted into adenylated molybdopterin and AMP is released. The chain is Molybdenum cofactor synthesis protein cinnamon (cin) from Drosophila melanogaster (Fruit fly).